A 586-amino-acid polypeptide reads, in one-letter code: Asparagine synthetase [glutamine-hydrolyzing] 2 (586 aa).

The For GATase activity role is filled by Cys2. A Glutamine amidotransferase type-2 domain is found at 2 to 185; that stretch reads CGILAVLGCS…PGHLYSSKEK (184 aa). Residues 50 to 54, 75 to 77, and Asp98 contribute to the L-glutamine site; these read RLAIV and NGE. Residues 193–516 form the Asparagine synthetase domain; the sequence is PPWFSEAIPS…PQNSARLSVP (324 aa). Residues Leu231, Val267, and 341-342 each bind ATP; that span reads SG.

The catalysed reaction is L-aspartate + L-glutamine + ATP + H2O = L-asparagine + L-glutamate + AMP + diphosphate + H(+). It participates in amino-acid biosynthesis; L-asparagine biosynthesis; L-asparagine from L-aspartate (L-Gln route): step 1/1. The polypeptide is Asparagine synthetase [glutamine-hydrolyzing] 2 (AS2) (Lotus japonicus (Lotus corniculatus var. japonicus)).